The following is a 181-amino-acid chain: Early E3 20.3 kDa glycoprotein (181 aa).

Residues N29, N57, N70, and N75 are each glycosylated (N-linked (GlcNAc...) asparagine; by host).

Belongs to the adenoviridae E3_20 family.

Functionally, E3 proteins seem to be dispensable for virus growth in tissue culture cells. They are potentially important for virus growth under special conditions; E3 region may help adenoviruses to evade the immune surveillance of the host. This is Early E3 20.3 kDa glycoprotein from Homo sapiens (Human).